The sequence spans 166 residues: Crossover junction endodeoxyribonuclease RuvC (166 aa).

Residues Asp7, Glu67, and Asp140 contribute to the active site. Residues Asp7, Glu67, and Asp140 each contribute to the Mg(2+) site.

Belongs to the RuvC family. Homodimer which binds Holliday junction (HJ) DNA. The HJ becomes 2-fold symmetrical on binding to RuvC with unstacked arms; it has a different conformation from HJ DNA in complex with RuvA. In the full resolvosome a probable DNA-RuvA(4)-RuvB(12)-RuvC(2) complex forms which resolves the HJ. The cofactor is Mg(2+).

It is found in the cytoplasm. The enzyme catalyses Endonucleolytic cleavage at a junction such as a reciprocal single-stranded crossover between two homologous DNA duplexes (Holliday junction).. In terms of biological role, the RuvA-RuvB-RuvC complex processes Holliday junction (HJ) DNA during genetic recombination and DNA repair. Endonuclease that resolves HJ intermediates. Cleaves cruciform DNA by making single-stranded nicks across the HJ at symmetrical positions within the homologous arms, yielding a 5'-phosphate and a 3'-hydroxyl group; requires a central core of homology in the junction. The consensus cleavage sequence is 5'-(A/T)TT(C/G)-3'. Cleavage occurs on the 3'-side of the TT dinucleotide at the point of strand exchange. HJ branch migration catalyzed by RuvA-RuvB allows RuvC to scan DNA until it finds its consensus sequence, where it cleaves and resolves the cruciform DNA. In Ruminiclostridium cellulolyticum (strain ATCC 35319 / DSM 5812 / JCM 6584 / H10) (Clostridium cellulolyticum), this protein is Crossover junction endodeoxyribonuclease RuvC.